A 69-amino-acid chain; its full sequence is U2-agatoxin-Ao1z (69 aa).

Residues 1–20 (MRAIISLLLISAMVFSMIEA) form the signal peptide. Residues 21 to 34 (VPVEEGLQLFEGER) constitute a propeptide that is removed on maturation. Intrachain disulfides connect C37–C53, C44–C58, and C52–C68.

Belongs to the neurotoxin 01 (U2-agtx) family. In terms of tissue distribution, expressed by the venom gland.

The protein resides in the secreted. Its function is as follows. Insect active toxin causing rapid but reversible paralysis in crickets. No activity shown in mammals. Does not show effect on mammalian voltage-gated calcium channels. In Agelena orientalis (Funnel-web spider), this protein is U2-agatoxin-Ao1z.